Consider the following 135-residue polypeptide: UPF0306 protein C8J_1355 (135 aa).

Belongs to the UPF0306 family.

The chain is UPF0306 protein C8J_1355 from Campylobacter jejuni subsp. jejuni serotype O:6 (strain 81116 / NCTC 11828).